Consider the following 24-residue polypeptide: Brevinin-1BYc (24 aa).

A disulfide bond links cysteine 18 and cysteine 24.

As to expression, expressed by the skin glands.

The protein resides in the secreted. Its function is as follows. Antibacterial activity against Gram-positive bacterium S.aureus. Weak antifungal activity against C.albicans. The chain is Brevinin-1BYc from Rana boylii (Foothill yellow-legged frog).